Reading from the N-terminus, the 242-residue chain is MAESALTPLRLAQLRRFAARFALSEPEALSWELLHRALIHPSWSAQEGGEDNDRLEFLGDEILRLLAAEFLYRADPELTVGEMTAVRSVLVSDVALAELAEGYDLGEFLVVGRSASGDERGRITRLADGFEAVIGALYLSTGDLGLIRPWLLPHLAHLAESVMADPTRGNHKSALQELTQKLAAGELPEYRLVDPGPPFRYEVWALGRLWGSGEGPSKKLAQQRAARGAYAALRSAFDTALQ.

The RNase III domain maps to 14 to 142 (LRRFAARFAL…VIGALYLSTG (129 aa)). Residue glutamate 56 participates in Mg(2+) binding. Residue aspartate 60 is part of the active site. Residues aspartate 128 and glutamate 131 each contribute to the Mg(2+) site. Residue glutamate 131 is part of the active site. The 66-residue stretch at 170–235 (NHKSALQELT…ARGAYAALRS (66 aa)) folds into the DRBM domain.

This sequence belongs to the ribonuclease III family. Homodimer. Mg(2+) serves as cofactor.

Its subcellular location is the cytoplasm. The catalysed reaction is Endonucleolytic cleavage to 5'-phosphomonoester.. Its function is as follows. Digests double-stranded RNA. Involved in the processing of primary rRNA transcript to yield the immediate precursors to the large and small rRNAs (23S and 16S). Processes some mRNAs, and tRNAs when they are encoded in the rRNA operon. Processes pre-crRNA and tracrRNA of type II CRISPR loci if present in the organism. In Gloeobacter violaceus (strain ATCC 29082 / PCC 7421), this protein is Ribonuclease 3.